Consider the following 597-residue polypeptide: Probable tyrosine-protein phosphatase (597 aa).

The span at 55–81 (VSSSSDAAPTSISTTTTSTTSMTDASA) shows a compositional bias: low complexity. 3 disordered regions span residues 55 to 89 (VSSS…QQVY), 107 to 172 (SFSI…PNSL), and 188 to 228 (STNG…GNNN). A compositionally biased stretch (polar residues) spans 107-126 (SFSIQPNQTPTMLPTSSYTL). Residues 136 to 151 (TSSISSISSTSSNSTS) are compositionally biased toward low complexity. 2 stretches are compositionally biased toward polar residues: residues 188–206 (STNG…NQPR) and 216–228 (KKST…GNNN). Residues 428–579 (GPKNVLNNLI…LMEFGDKLNN (152 aa)) enclose the Tyrosine-protein phosphatase domain. Cys-516 (phosphocysteine intermediate) is an active-site residue.

The protein belongs to the protein-tyrosine phosphatase family. Non-receptor class dual specificity subfamily.

The enzyme catalyses O-phospho-L-tyrosyl-[protein] + H2O = L-tyrosyl-[protein] + phosphate. This Candida albicans (strain WO-1) (Yeast) protein is Probable tyrosine-protein phosphatase (CPP1).